A 377-amino-acid chain; its full sequence is Glutamate 5-kinase (377 aa).

Position 20 (Lys20) interacts with ATP. Residues Ser60, Asp147, and Asn159 each coordinate substrate. An ATP-binding site is contributed by 179 to 180; that stretch reads TD. The region spanning 285–363 is the PUA domain; that stretch reads AGRLVIDAGA…DKVHQVLGEA (79 aa).

Belongs to the glutamate 5-kinase family.

The protein localises to the cytoplasm. It catalyses the reaction L-glutamate + ATP = L-glutamyl 5-phosphate + ADP. It functions in the pathway amino-acid biosynthesis; L-proline biosynthesis; L-glutamate 5-semialdehyde from L-glutamate: step 1/2. Catalyzes the transfer of a phosphate group to glutamate to form L-glutamate 5-phosphate. The protein is Glutamate 5-kinase of Acinetobacter baylyi (strain ATCC 33305 / BD413 / ADP1).